A 397-amino-acid chain; its full sequence is Succinate--CoA ligase [ADP-forming] subunit beta (397 aa).

Residues 9–254 (KALLKGYGAP…ETEEDAKEIE (246 aa)) enclose the ATP-grasp domain. Residues lysine 46, 53–55 (GRG), glutamate 109, alanine 112, and glutamate 117 contribute to the ATP site. Mg(2+)-binding residues include asparagine 209 and aspartate 223. Substrate-binding positions include asparagine 274 and 331–333 (GIM).

The protein belongs to the succinate/malate CoA ligase beta subunit family. In terms of assembly, heterotetramer of two alpha and two beta subunits. It depends on Mg(2+) as a cofactor.

It catalyses the reaction succinate + ATP + CoA = succinyl-CoA + ADP + phosphate. It carries out the reaction GTP + succinate + CoA = succinyl-CoA + GDP + phosphate. The protein operates within carbohydrate metabolism; tricarboxylic acid cycle; succinate from succinyl-CoA (ligase route): step 1/1. In terms of biological role, succinyl-CoA synthetase functions in the citric acid cycle (TCA), coupling the hydrolysis of succinyl-CoA to the synthesis of either ATP or GTP and thus represents the only step of substrate-level phosphorylation in the TCA. The beta subunit provides nucleotide specificity of the enzyme and binds the substrate succinate, while the binding sites for coenzyme A and phosphate are found in the alpha subunit. The sequence is that of Succinate--CoA ligase [ADP-forming] subunit beta from Rhizobium etli (strain CIAT 652).